We begin with the raw amino-acid sequence, 75 residues long: MKADIHPNYHTITVVMTDGTEYQTRSTWGKEGDKLNLDIDPKSHPAWTGGTQQIMDRGGRVSRFQKKFQGFLKKD.

This sequence belongs to the bacterial ribosomal protein bL31 family. Type A subfamily. In terms of assembly, part of the 50S ribosomal subunit.

Functionally, binds the 23S rRNA. The chain is Large ribosomal subunit protein bL31 from Bradyrhizobium sp. (strain BTAi1 / ATCC BAA-1182).